A 158-amino-acid chain; its full sequence is Style cell-cycle inhibitor 1-B (158 aa).

2 stretches are compositionally biased toward basic and acidic residues: residues 1 to 11 and 22 to 47; these read MGSDKKTTEEK and PRDEVKSKRQNIKGDEERRKEKDKSK. Positions 1–88 are disordered; that stretch reads MGSDKKTTEE…DKSKNKFEEL (88 aa). Basic residues-rich tracts occupy residues 48 to 58 and 67 to 81; these read KEKHKSHKSKC and GEKHKTKSHKHKDKS.

As to expression, specifically expressed in flowers pistils, especially in stigmas and styles. Barely detected in roots, stems, leaves, sepals, petals and stamen.

The protein localises to the nucleus. Its function is as follows. Component of the auxin signaling transduction pathway that regulates cell proliferation and differentiation during flowers stigmas and styles development. Involved in the regulation of auxin-related genes. This chain is Style cell-cycle inhibitor 1-B, found in Nicotiana tabacum (Common tobacco).